The chain runs to 2289 residues: DNA polymerase II large subunit (2289 aa).

Disordered regions lie at residues 279–330 (IGSD…SPRA) and 544–563 (SDTN…NTDD). Basic and acidic residues predominate over residues 292–304 (GEADIVKTDKDTN). Acidic residues predominate over residues 305–318 (ESETEDGIDNDDYN). Polar residues predominate over residues 544 to 557 (SDTNSASGNTSLRA). DOD-type homing endonuclease domains lie at 1222 to 1367 (LLGY…RLGI) and 1755 to 1911 (LLGQ…RLGV).

Belongs to the archaeal DNA polymerase II family. In terms of assembly, heterodimer of a large subunit and a small subunit. In terms of processing, this protein undergoes a protein self splicing that involves a post-translational excision of the intervening region (intein) followed by peptide ligation.

The catalysed reaction is DNA(n) + a 2'-deoxyribonucleoside 5'-triphosphate = DNA(n+1) + diphosphate. It carries out the reaction Exonucleolytic cleavage in the 3'- to 5'-direction to yield nucleoside 5'-phosphates.. In terms of biological role, possesses two activities: a DNA synthesis (polymerase) and an exonucleolytic activity that degrades single-stranded DNA in the 3'- to 5'-direction. Has a template-primer preference which is characteristic of a replicative DNA polymerase. The protein is DNA polymerase II large subunit of Haloquadratum walsbyi (strain DSM 16790 / HBSQ001).